The sequence spans 581 residues: Netrin-3 (581 aa).

An N-terminal signal peptide occupies residues 1 to 15 (LRLLLTTSVLRLARA). The Laminin N-terminal domain occupies 35–261 (APRRCIPEFV…SVGELQVGGR (227 aa)). 2 N-linked (GlcNAc...) asparagine glycosylation sites follow: N88 and N103. 15 disulfides stabilise this stretch: C91–C124, C262–C271, C264–C281, C283–C292, C295–C315, C318–C327, C320–C345, C348–C357, C360–C378, C381–C393, C383–C400, C402–C411, C414–C428, C449–C521, and C468–C578. 3 consecutive Laminin EGF-like domains span residues 262–317 (CKCN…ECLA), 318–380 (CNCN…ACKA), and 381–430 (CDCH…PCIK). Residue N394 is glycosylated (N-linked (GlcNAc...) asparagine). Residues 449–578 (CDSYCKPAKG…LQRREKKGKC (130 aa)) form the NTR domain. Positions 507 to 509 (RGD) match the Cell attachment site motif. N540 is a glycosylation site (N-linked (GlcNAc...) asparagine).

Its subcellular location is the secreted. It localises to the extracellular space. It is found in the extracellular matrix. Its function is as follows. Netrins control guidance of CNS commissural axons and peripheral motor axons. This is Netrin-3 (NTN3) from Gallus gallus (Chicken).